A 196-amino-acid polypeptide reads, in one-letter code: Zinc metalloproteinase-disintegrin-like bothrojarin-3 (196 aa).

One can recognise a Disintegrin domain in the interval 2-88 (PPVCGTELLE…DCPTDDIQRN (87 aa)). 5 residues coordinate Ca(2+): V4, L9, E11, E14, and D17. 13 disulfides stabilise this stretch: C5-C34, C16-C29, C18-C24, C28-C51, C42-C48, C47-C73, C60-C80, C67-C99, C92-C104, C111-C161, C126-C168, C139-C149, and C156-C193. The short motif at 66 to 68 (ECD) is the D/ECD-tripeptide element.

The protein belongs to the venom metalloproteinase (M12B) family. P-III subfamily. P-IIIa sub-subfamily. As to quaternary structure, monomer. Requires Zn(2+) as cofactor. In terms of processing, glycosylated. Expressed by the venom gland.

Its subcellular location is the secreted. The hemorrhagic metalloproteinase-disintegrin-like bothrojarin-1 is a potent inhibitor of collagen-induced platelet aggregation by blockage of alpha-2/beta-1 (ITGA2/ITGB1) integrin. It does not present any fibrinogen-clotting activity. This is Zinc metalloproteinase-disintegrin-like bothrojarin-3 from Bothrops jararaca (Jararaca).